The following is a 454-amino-acid chain: Innexin-19 (454 aa).

Over 1–48 (MWRTPASTGPLRQDRQMFFHATLARSFINALSVRGDDDAVDRLNYYYT) the chain is Cytoplasmic. The helical transmembrane segment at 49–69 (PLILAVCCLVISAKQYGGTPI) threads the bilayer. The Extracellular segment spans residues 70 to 118 (ECWVNPHSRESMEEYIESYCWIQNTYWIPMYENVPDDHTAREEKQIGYY). A helical membrane pass occupies residues 119-139 (QWVPFILIAEALMFSLPCIFW). Topologically, residues 140–214 (RLCSFQSGLN…SRFLSGQCLS (75 aa)) are cytoplasmic. A helical membrane pass occupies residues 215–235 (ILHSFTKLLYSMNVVAQFLIL). Over 236–300 (NACLKSSDFL…ALLINIINEK (65 aa)) the chain is Extracellular. The chain crosses the membrane as a helical span at residues 301 to 321 (VFAFLWCWYMILAIITTCSFI). Residues 322-454 (YWIANSFIHS…SNPGQTKSFL (133 aa)) lie on the Cytoplasmic side of the membrane.

This sequence belongs to the pannexin family. In terms of tissue distribution, specifically expressed in sensory neurons and interneurons in the head and tail. Expressed in neurons AWC, ASH, AFD, ASI, ADL, ASK, BAG, AWB, and ADF (head sensory neurons); ADA, AIZ, RIC, AIY, and AIM (head interneurons); PHA and PHB (tail sensory neurons); and PVC and PVQ (tail interneurons).

It is found in the cell membrane. It localises to the cell junction. The protein resides in the gap junction. Its function is as follows. Structural component of the gap junctions that specifically coordinates left-right asymmetry in the developing nervous system. Acts by forming gap junction network linking embryonic neurons and providing electrical coupling between cells, leading to promote or inhibit AWC signaling. Required for the left and right AWC olfactory neurons to establish asymmetric patterns of gene expression during embryogenesis. Acts autonomously. The polypeptide is Innexin-19 (inx-19) (Caenorhabditis elegans).